We begin with the raw amino-acid sequence, 258 residues long: Isoprenyl transferase (258 aa).

The active site involves Asp38. Asp38 provides a ligand contact to Mg(2+). Residues 39-42, Trp43, Arg51, His55, and 83-85 each bind substrate; these read GNGR and STE. Asn86 functions as the Proton acceptor in the catalytic mechanism. Substrate contacts are provided by residues Trp87, Arg89, Arg206, and 212 to 214; that span reads RIS. Glu225 contributes to the Mg(2+) binding site.

The protein belongs to the UPP synthase family. As to quaternary structure, homodimer. Mg(2+) is required as a cofactor.

Its function is as follows. Catalyzes the condensation of isopentenyl diphosphate (IPP) with allylic pyrophosphates generating different type of terpenoids. In Bacillus anthracis, this protein is Isoprenyl transferase.